The following is a 211-amino-acid chain: Probable GTP-binding protein EngB (211 aa).

In terms of domain architecture, EngB-type G spans S26 to T200. GTP contacts are provided by residues G34–S41, G61–L65, D79–G82, T146–D149, and F179–S181. 2 residues coordinate Mg(2+): S41 and T63.

The protein belongs to the TRAFAC class TrmE-Era-EngA-EngB-Septin-like GTPase superfamily. EngB GTPase family. Mg(2+) is required as a cofactor.

Functionally, necessary for normal cell division and for the maintenance of normal septation. This is Probable GTP-binding protein EngB from Pectobacterium carotovorum subsp. carotovorum (strain PC1).